A 493-amino-acid chain; its full sequence is Ketol-acid reductoisomerase (NADP(+)) (493 aa).

The region spanning 17-208 is the KARI N-terminal Rossmann domain; sequence LGKCRFMKRE…GGDRAGVLES (192 aa). Residues 45 to 48, arginine 68, arginine 76, serine 78, and 108 to 110 contribute to the NADP(+) site; these read CGAQ and DKQ. The active site involves histidine 132. Residue glycine 158 coordinates NADP(+). 2 KARI C-terminal knotted domains span residues 209-353 and 354-486; these read SFIA…SEQE and YYDK…MTDM. Aspartate 217, glutamate 221, glutamate 389, and glutamate 393 together coordinate Mg(2+). A substrate-binding site is contributed by serine 414.

It belongs to the ketol-acid reductoisomerase family. Requires Mg(2+) as cofactor.

The enzyme catalyses (2R)-2,3-dihydroxy-3-methylbutanoate + NADP(+) = (2S)-2-acetolactate + NADPH + H(+). It catalyses the reaction (2R,3R)-2,3-dihydroxy-3-methylpentanoate + NADP(+) = (S)-2-ethyl-2-hydroxy-3-oxobutanoate + NADPH + H(+). It participates in amino-acid biosynthesis; L-isoleucine biosynthesis; L-isoleucine from 2-oxobutanoate: step 2/4. Its pathway is amino-acid biosynthesis; L-valine biosynthesis; L-valine from pyruvate: step 2/4. Its function is as follows. Involved in the biosynthesis of branched-chain amino acids (BCAA). Catalyzes an alkyl-migration followed by a ketol-acid reduction of (S)-2-acetolactate (S2AL) to yield (R)-2,3-dihydroxy-isovalerate. In the isomerase reaction, S2AL is rearranged via a Mg-dependent methyl migration to produce 3-hydroxy-3-methyl-2-ketobutyrate (HMKB). In the reductase reaction, this 2-ketoacid undergoes a metal-dependent reduction by NADPH to yield (R)-2,3-dihydroxy-isovalerate. This Colwellia psychrerythraea (strain 34H / ATCC BAA-681) (Vibrio psychroerythus) protein is Ketol-acid reductoisomerase (NADP(+)).